We begin with the raw amino-acid sequence, 1320 residues long: Myopalladin (1320 aa).

Residues 1–522 are interaction with CARP; that stretch reads MQDDSIEAST…FTCTASNKYG (522 aa). Disordered regions lie at residues 19–68, 84–145, and 165–271; these read SYLA…AFLS, NYDP…SETQ, and FKSH…PPRF. Composition is skewed to basic and acidic residues over residues 23 to 35 and 87 to 106; these read ETRHRGNNERSRA and PLEKADETQARKRLSPDQMK. Residue Ser-101 is modified to Phosphoserine. Positions 107-130 are enriched in polar residues; sequence HSPNLSFEPNFCQDNPRSPTSSKE. Ser-131 carries the phosphoserine modification. Residues 168-182 show a composition bias toward basic residues; sequence HSSKRIRPRACKNHK. Positions 186-201 are enriched in polar residues; it reads ESQNKVMQENSSSFSD. Residues 218–239 show a composition bias toward basic and acidic residues; that stretch reads DTRDNEVNHALEQQEAKRREAE. The stretch at 219-248 forms a coiled coil; sequence TRDNEVNHALEQQEAKRREAEQAASEAAGG. The span at 240–258 shows a compositional bias: low complexity; it reads QAASEAAGGDTTPGSSPSS. A Phosphothreonine modification is found at Thr-251. Ig-like domains lie at 269–359 and 435–531; these read PRFT…IYIE and PVFT…AQLH. 2 disulfide bridges follow: Cys-290-Cys-341 and Cys-456-Cys-515. The segment at 554-655 is disordered; that stretch reads AAIEPQPSPP…VKEPPPVLAK (102 aa). Residues 559–575 show a composition bias toward pro residues; sequence QPSPPHSEPPSVEQPPK. Ser-644 carries the post-translational modification Phosphoserine. Positions 649–677 are interaction with NEB; the sequence is PPPVLAKPKLDSTQLQQLHNQVLLEQHQL. Ser-759 is subject to Phosphoserine. The segment at 763–805 is disordered; that stretch reads LLVSHPSVQTKSPGGLSIQNEPLPPGPTEPTPPPFTFSIPSGN. Residues 768 to 782 show a composition bias toward polar residues; it reads PSVQTKSPGGLSIQN. Positions 784-797 are enriched in pro residues; sequence PLPPGPTEPTPPPF. Residues Ser-813, Ser-818, Ser-867, Ser-907, and Ser-928 each carry the phosphoserine modification. The disordered stretch occupies residues 844–876; sequence NAMGLPRSAPSMPSQGLAKKNTKSPQPVNDDNI. Ig-like domains follow at residues 945–1029, 1073–1162, and 1172–1262; these read PIFD…GRIS, PHFL…LELS, and PVIL…ARLD. The segment at 945 to 1320 is interaction with ACTN; it reads PIFDKRLKHF…SRSVVESDEL (376 aa). A disulfide bridge connects residues Cys-1094 and Cys-1146.

The protein belongs to the myotilin/palladin family. Interacts with TTN/titin, NEB, NEBL, ACTN2 and CARP. Expressed in adult skeletal muscle and fetal heart.

The protein localises to the cytoplasm. Its subcellular location is the nucleus. The protein resides in the myofibril. It localises to the sarcomere. It is found in the z line. In terms of biological role, component of the sarcomere that tethers together nebulin (skeletal muscle) and nebulette (cardiac muscle) to alpha-actinin, at the Z lines. In Homo sapiens (Human), this protein is Myopalladin (MYPN).